The sequence spans 366 residues: Succinyl-diaminopimelate desuccinylase (366 aa).

His-66 provides a ligand contact to Zn(2+). Asp-68 is an active-site residue. Residue Asp-97 coordinates Zn(2+). The Proton acceptor role is filled by Glu-127. 3 residues coordinate Zn(2+): Glu-128, Glu-156, and His-341.

It belongs to the peptidase M20A family. DapE subfamily. As to quaternary structure, homodimer. Zn(2+) is required as a cofactor. Co(2+) serves as cofactor.

The catalysed reaction is N-succinyl-(2S,6S)-2,6-diaminopimelate + H2O = (2S,6S)-2,6-diaminopimelate + succinate. It participates in amino-acid biosynthesis; L-lysine biosynthesis via DAP pathway; LL-2,6-diaminopimelate from (S)-tetrahydrodipicolinate (succinylase route): step 3/3. Its function is as follows. Catalyzes the hydrolysis of N-succinyl-L,L-diaminopimelic acid (SDAP), forming succinate and LL-2,6-diaminopimelate (DAP), an intermediate involved in the bacterial biosynthesis of lysine and meso-diaminopimelic acid, an essential component of bacterial cell walls. The protein is Succinyl-diaminopimelate desuccinylase of Aliarcobacter butzleri (strain RM4018) (Arcobacter butzleri).